The sequence spans 878 residues: Alanine--tRNA ligase (878 aa).

Residues His558, His562, Cys663, and His667 each coordinate Zn(2+).

It belongs to the class-II aminoacyl-tRNA synthetase family. Zn(2+) is required as a cofactor.

It localises to the cytoplasm. The enzyme catalyses tRNA(Ala) + L-alanine + ATP = L-alanyl-tRNA(Ala) + AMP + diphosphate. In terms of biological role, catalyzes the attachment of alanine to tRNA(Ala) in a two-step reaction: alanine is first activated by ATP to form Ala-AMP and then transferred to the acceptor end of tRNA(Ala). Also edits incorrectly charged Ser-tRNA(Ala) and Gly-tRNA(Ala) via its editing domain. In Mycoplasmopsis synoviae (strain 53) (Mycoplasma synoviae), this protein is Alanine--tRNA ligase.